The primary structure comprises 487 residues: MTTHYIAGSWQAGQGEALQSLNPVTQAVVWQGQGADASQVDAAVLAARQAFPAWAQLSLEARIDVLEKFAEQLKQHSEALAYCIGEETGKPLWESATEVTSMVNKVAISIQSYRERTGEKSGPLADATAVLRHKPHGVVAVFGPYNFPGHLPNGHIVPALLAGNCVVFKPSELTPKVAELTVNCWIAAGLPAGVLNLVQGARETGVALAANPGIDGLFFTGSSRTGNLLHQQFAGRPDKILALEMGGNNPLVVDGVKDLDAAVYTIIQSAFISAGQRCTCARRLLVPQGAWGDALVIRLVEVCKSITVGAFDQQPAPFMGSVISLQAARALVAAQSELLAKGATQLLEMTQPQADAALLTPGIIDVTAVADRPDEEFFGPLLQVIRYADFDAAIDEANNTQYGLAAGLLSDSRARYQYFWLRSRAGIVNWNKQLTGAASSAPFGGIGASGNHRASAYYAADYCAYPVASLETASLALPATLTPGVTL.

221 to 226 (GSSRTG) is an NAD(+) binding site. Residues glutamate 244 and cysteine 278 contribute to the active site.

It belongs to the aldehyde dehydrogenase family. AstD subfamily.

The enzyme catalyses N-succinyl-L-glutamate 5-semialdehyde + NAD(+) + H2O = N-succinyl-L-glutamate + NADH + 2 H(+). Its pathway is amino-acid degradation; L-arginine degradation via AST pathway; L-glutamate and succinate from L-arginine: step 4/5. Catalyzes the NAD-dependent reduction of succinylglutamate semialdehyde into succinylglutamate. The chain is N-succinylglutamate 5-semialdehyde dehydrogenase from Pseudomonas putida (strain W619).